Consider the following 208-residue polypeptide: Ribosomal RNA small subunit methyltransferase G (208 aa).

S-adenosyl-L-methionine-binding positions include G78, F83, 101–103 (ERS), 129–130 (IE), and R142.

Belongs to the methyltransferase superfamily. RNA methyltransferase RsmG family.

Its subcellular location is the cytoplasm. Its function is as follows. Specifically methylates the N7 position of a guanine in 16S rRNA. This chain is Ribosomal RNA small subunit methyltransferase G, found in Borreliella burgdorferi (strain ZS7) (Borrelia burgdorferi).